Reading from the N-terminus, the 157-residue chain is 3-hydroxyacyl-[acyl-carrier-protein] dehydratase FabZ (157 aa).

Residue H58 is part of the active site.

Belongs to the thioester dehydratase family. FabZ subfamily.

It is found in the cytoplasm. The catalysed reaction is a (3R)-hydroxyacyl-[ACP] = a (2E)-enoyl-[ACP] + H2O. Involved in unsaturated fatty acids biosynthesis. Catalyzes the dehydration of short chain beta-hydroxyacyl-ACPs and long chain saturated and unsaturated beta-hydroxyacyl-ACPs. The sequence is that of 3-hydroxyacyl-[acyl-carrier-protein] dehydratase FabZ from Brucella abortus biovar 1 (strain 9-941).